The following is a 434-amino-acid chain: Serine--tRNA ligase (434 aa).

Residue Thr-237–Glu-239 coordinates L-serine. An ATP-binding site is contributed by Arg-268 to Glu-270. Residue Glu-291 participates in L-serine binding. Residue Glu-358–Ser-361 coordinates ATP. Ser-393 lines the L-serine pocket.

The protein belongs to the class-II aminoacyl-tRNA synthetase family. Type-1 seryl-tRNA synthetase subfamily. As to quaternary structure, homodimer. The tRNA molecule binds across the dimer.

It is found in the cytoplasm. It catalyses the reaction tRNA(Ser) + L-serine + ATP = L-seryl-tRNA(Ser) + AMP + diphosphate + H(+). The enzyme catalyses tRNA(Sec) + L-serine + ATP = L-seryl-tRNA(Sec) + AMP + diphosphate + H(+). The protein operates within aminoacyl-tRNA biosynthesis; selenocysteinyl-tRNA(Sec) biosynthesis; L-seryl-tRNA(Sec) from L-serine and tRNA(Sec): step 1/1. Catalyzes the attachment of serine to tRNA(Ser). Is also able to aminoacylate tRNA(Sec) with serine, to form the misacylated tRNA L-seryl-tRNA(Sec), which will be further converted into selenocysteinyl-tRNA(Sec). In Rhodopseudomonas palustris (strain BisB5), this protein is Serine--tRNA ligase.